The chain runs to 408 residues: NADH-quinone oxidoreductase subunit D (408 aa).

It belongs to the complex I 49 kDa subunit family. NDH-1 is composed of 14 different subunits. Subunits NuoB, C, D, E, F, and G constitute the peripheral sector of the complex.

Its subcellular location is the cell inner membrane. It carries out the reaction a quinone + NADH + 5 H(+)(in) = a quinol + NAD(+) + 4 H(+)(out). Its function is as follows. NDH-1 shuttles electrons from NADH, via FMN and iron-sulfur (Fe-S) centers, to quinones in the respiratory chain. The immediate electron acceptor for the enzyme in this species is believed to be ubiquinone. Couples the redox reaction to proton translocation (for every two electrons transferred, four hydrogen ions are translocated across the cytoplasmic membrane), and thus conserves the redox energy in a proton gradient. The polypeptide is NADH-quinone oxidoreductase subunit D (Campylobacter hominis (strain ATCC BAA-381 / DSM 21671 / CCUG 45161 / LMG 19568 / NCTC 13146 / CH001A)).